A 1171-amino-acid polypeptide reads, in one-letter code: ATP-dependent helicase/deoxyribonuclease subunit B (1171 aa).

The region spanning 1–390 (MSLRFVIGRA…HPLVECIRSA (390 aa)) is the UvrD-like helicase ATP-binding domain. ATP is bound at residue 8–15 (GRAGSGKS). The UvrD-like helicase C-terminal domain maps to 281-587 (MEQPRFHSPA…QFANIPPSLD (307 aa)). Cys-805, Cys-1129, Cys-1132, and Cys-1138 together coordinate [4Fe-4S] cluster.

It belongs to the helicase family. AddB/RexB type 1 subfamily. Heterodimer of AddA and AddB. Mg(2+) serves as cofactor. [4Fe-4S] cluster is required as a cofactor.

In terms of biological role, the heterodimer acts as both an ATP-dependent DNA helicase and an ATP-dependent, dual-direction single-stranded exonuclease. Recognizes the chi site generating a DNA molecule suitable for the initiation of homologous recombination. The AddB subunit has 5' -&gt; 3' nuclease activity but not helicase activity. The sequence is that of ATP-dependent helicase/deoxyribonuclease subunit B from Bacillus cereus (strain ZK / E33L).